The following is an 80-amino-acid chain: Protein P9 (80 aa).

As to quaternary structure, self-associates.

The protein is Protein P9 of Beta vulgaris (Sugar beet).